We begin with the raw amino-acid sequence, 1661 residues long: Beta/gamma crystallin domain-containing protein 2 (1661 aa).

8 disordered regions span residues 72–135, 148–168, 242–268, 297–321, 337–380, 411–757, 808–871, and 883–903; these read EEET…PPCV, PGPR…SSRS, VPAG…GLGS, PASA…GRAP, STEL…THPG, EHVT…EEDE, LGPW…VSCS, and TKGP…PTSR. Basic and acidic residues predominate over residues 105–118; that stretch reads PKEKRPEGRLKEAV. Polar residues predominate over residues 337–353; sequence STELPLQTSQGQASVPS. Residues 431-442 are compositionally biased toward low complexity; that stretch reads PSPGGLSAPSSP. Composition is skewed to polar residues over residues 507-519, 628-644, and 685-697; these read SSPT…QGSS, PKST…SSIQ, and SEGS…TQKE. Residues 706-719 are compositionally biased toward low complexity; sequence PAPSSSVDRVSPSP. The segment covering 731 to 750 has biased composition (polar residues); it reads EASTESQLVSDPTEGKTCTE. Residues 825-835 are compositionally biased toward acidic residues; it reads EKEEEEEEEPE. The span at 841–851 shows a compositional bias: basic and acidic residues; the sequence is DDEKLQRRQEK. Beta/gamma crystallin 'Greek key' domains follow at residues 986–1023, 1024–1067, 1073–1113, 1114–1156, 1168–1213, 1214–1256, 1262–1302, 1303–1345, 1356–1393, 1394–1437, 1443–1483, and 1484–1525; these read GKVI…RVVR, GCWV…RRVV, PEIS…TVSA, GLWL…KPMR, PRAV…RVLG, GCWV…RVIR, PAVV…HVLS, GVWV…QPVL, SKIQ…RVHG, GSWI…QKVS, PSIF…RIKG, and GIWV…YPIK. Residues 1569 to 1659 enclose the Ricin B-type lectin domain; that stretch reads WYYEDGLLKN…DRASQIWTIH (91 aa).

It belongs to the beta/gamma-crystallin family.

This is Beta/gamma crystallin domain-containing protein 2 from Homo sapiens (Human).